The primary structure comprises 258 residues: F-box/SPRY domain-containing protein 1 (258 aa).

The 49-residue stretch at 6 to 54 folds into the F-box domain; sequence MEYAPNIPDNVLELIFSFLKLQDLRNCTLVCKSWYRFFCDENNEVWRAQ. In terms of domain architecture, B30.2/SPRY spans 64–256; sequence FKNDLLTVVP…ISMVYLGAPL (193 aa).

This sequence belongs to the FBXO45/Fsn family. Component of an E3 ubiquitin ligase complex composed of hiw and Fsn.

Its subcellular location is the synapse. It functions in the pathway protein modification; protein ubiquitination. Required in the presynaptic motoneuron to down-regulate the levels of wnd and restrain synaptic terminal growth at the neuromuscular junction (NMJ). This Anopheles gambiae (African malaria mosquito) protein is F-box/SPRY domain-containing protein 1.